Reading from the N-terminus, the 507-residue chain is uncharacterized protein (507 aa).

A run of 12 helical transmembrane segments spans residues 11–31 (ILCFFLWQFGLFYACQLIFPI), 97–117 (AWIATIQFIGALVGALVYGHL), 125–145 (PVSFVGISIGIIFGVASGFAP), 149–169 (VFAVLLFICGTSVACIMIVFY), 187–207 (FFNWGYARLVFTLVCFICGYW), 209–229 (SAAIATSLLALPILPVLLWLP), 283–303 (LFSSWPIAYSTIVVGSLWFST), 326–346 (FVQAAAIALSKLSIFLLDLFI), 354–374 (LHQVPQIIMIACYTTIMALMI), 388–408 (LAIIIINIIGTSFIELTWDAC), 423–443 (IGIGTCSLLARIGALLAPQMA), and 452–472 (IPYIIVCSIGIISLLISCFFL).

The protein belongs to the major facilitator superfamily.

It localises to the membrane. This is an uncharacterized protein from Caenorhabditis elegans.